A 387-amino-acid polypeptide reads, in one-letter code: Paralemmin-1 (387 aa).

Met1 carries the N-acetylmethionine modification. Positions 7 to 104 (ETISQQERLQ…IEELENADTL (98 aa)) form a coiled coil. Disordered stretches follow at residues 22-78 (RRRQ…QEDE) and 98-133 (LENA…DRKA). 2 stretches are compositionally biased toward basic and acidic residues: residues 25–41 (QAEV…DRRQ) and 69–78 (DMRKQMQEDE). The residue at position 116 (Ser116) is a Phosphoserine. Over residues 116-125 (SPGPVVPAPC) the composition is skewed to pro residues. Residues Thr142 and Thr146 each carry the phosphothreonine modification. At Ser163 the chain carries Phosphoserine. A Phosphothreonine modification is found at Thr244. Ser246 is subject to Phosphoserine. Disordered stretches follow at residues 246-297 (SEAG…QEPP) and 334-378 (AAEP…DMKK). Over residues 258-273 (GPSEEVVRTTPSRREI) the composition is skewed to basic and acidic residues. The span at 286 to 297 (GPPGIQPGQEPP) shows a compositional bias: low complexity. A phosphoserine mark is found at Ser346 and Ser369. 2 S-palmitoyl cysteine lipidation sites follow: Cys381 and Cys383. Residue Cys384 is modified to Cysteine methyl ester. Cys384 is lipidated: S-farnesyl cysteine. A propeptide spans 385-387 (SIM) (removed in mature form).

It belongs to the paralemmin family. Interacts with dopamine receptor DRD3. Phosphorylated.

The protein resides in the cell membrane. Its subcellular location is the cell projection. It localises to the filopodium membrane. It is found in the axon. The protein localises to the dendrite. The protein resides in the dendritic spine. Its subcellular location is the basolateral cell membrane. It localises to the apicolateral cell membrane. Functionally, involved in plasma membrane dynamics and cell process formation. Necessary for axonal and dendritic filopodia induction, for dendritic spine maturation and synapse formation in a palmitoylation-dependent manner. The polypeptide is Paralemmin-1 (PALM) (Sus scrofa (Pig)).